We begin with the raw amino-acid sequence, 653 residues long: MSAAPLYPVRPEVAATTLTDEATYKAMYQQSVINPDGFWREQAQRIDWIKPFTKVKQTSFDDHHVDIKWFADGTLNVSSNCLDRHLEERGDQLAIIWEGDDPSEHRNITYRELHEQVCKFANALRGQDVHRGDVVTIYMPMIPEAVVAMLACARIGAIHSVVFGGFSPEALAGRIIDCKSKVVITADEGVRGGRRTPLKANVDLALTNPETSSVQKIIVCKRTGGDIAWHQHRDIWYEDLMKVASSHCAPKEMGAEEALFILYTSGSTGKPKGVLHTTGGYLVYAALTHERVFDYRPGEVYWCTADVGWVTGHSYIVYGPLANGATTLLFEGVPNYPDITRVSKIVDKHKVNILYTAPTAIRAMMAEGQAAVEGADGSSLRLLGSVGEPINPEAWNWYYKTVGKERCPIVDTWWQTETGGILISPLPGATGLKPGSATRPFFGVVPALVDNLGNLIDGAAEGNLVILDSWPGQSRSLYGDHDRFVDTYFKTFRGMYFTGDGARRDEDGYYWITGRVDDVLNVSGHRMGTAEIESAMVAHSKVAEAAVVGVPHDIKGQGIYVYVTLNAGIEASEQLRLELKNWVRKEIGPIASPDVIQWAPGLPKTRSGKIMRRILRKIATGEYDALGDISTLADPGVVQHLIDTHKAMNLASA.

CoA-binding positions include 191 to 194 (RGGR), threonine 311, and asparagine 335. ATP is bound by residues 387 to 389 (GEP), 411 to 416 (DTWWQT), aspartate 500, and arginine 515. Position 523 (serine 523) interacts with CoA. Arginine 526 is a binding site for ATP. Mg(2+)-binding residues include valine 537, histidine 539, and valine 542. Residue arginine 584 coordinates CoA. Lysine 609 carries the post-translational modification N6-acetyllysine.

Belongs to the ATP-dependent AMP-binding enzyme family. It depends on Mg(2+) as a cofactor. Acetylated. Deacetylation by the SIR2-homolog deacetylase activates the enzyme.

The catalysed reaction is acetate + ATP + CoA = acetyl-CoA + AMP + diphosphate. Functionally, catalyzes the conversion of acetate into acetyl-CoA (AcCoA), an essential intermediate at the junction of anabolic and catabolic pathways. AcsA undergoes a two-step reaction. In the first half reaction, AcsA combines acetate with ATP to form acetyl-adenylate (AcAMP) intermediate. In the second half reaction, it can then transfer the acetyl group from AcAMP to the sulfhydryl group of CoA, forming the product AcCoA. The polypeptide is Acetyl-coenzyme A synthetase 1 (Pseudomonas putida (strain ATCC 47054 / DSM 6125 / CFBP 8728 / NCIMB 11950 / KT2440)).